We begin with the raw amino-acid sequence, 350 residues long: Histidinol-phosphate aminotransferase 2 (350 aa).

K210 carries the post-translational modification N6-(pyridoxal phosphate)lysine.

It belongs to the class-II pyridoxal-phosphate-dependent aminotransferase family. Histidinol-phosphate aminotransferase subfamily. Homodimer. Requires pyridoxal 5'-phosphate as cofactor.

It carries out the reaction L-histidinol phosphate + 2-oxoglutarate = 3-(imidazol-4-yl)-2-oxopropyl phosphate + L-glutamate. The protein operates within amino-acid biosynthesis; L-histidine biosynthesis; L-histidine from 5-phospho-alpha-D-ribose 1-diphosphate: step 7/9. The polypeptide is Histidinol-phosphate aminotransferase 2 (Mannheimia succiniciproducens (strain KCTC 0769BP / MBEL55E)).